The following is a 511-amino-acid chain: Bifunctional purine biosynthesis protein PurH (511 aa).

Residues 1–145 (MKKRALVSVS…KNHKFVSVIV (145 aa)) enclose the MGS-like domain.

The protein belongs to the PurH family.

The catalysed reaction is (6R)-10-formyltetrahydrofolate + 5-amino-1-(5-phospho-beta-D-ribosyl)imidazole-4-carboxamide = 5-formamido-1-(5-phospho-D-ribosyl)imidazole-4-carboxamide + (6S)-5,6,7,8-tetrahydrofolate. The enzyme catalyses IMP + H2O = 5-formamido-1-(5-phospho-D-ribosyl)imidazole-4-carboxamide. Its pathway is purine metabolism; IMP biosynthesis via de novo pathway; 5-formamido-1-(5-phospho-D-ribosyl)imidazole-4-carboxamide from 5-amino-1-(5-phospho-D-ribosyl)imidazole-4-carboxamide (10-formyl THF route): step 1/1. It participates in purine metabolism; IMP biosynthesis via de novo pathway; IMP from 5-formamido-1-(5-phospho-D-ribosyl)imidazole-4-carboxamide: step 1/1. The polypeptide is Bifunctional purine biosynthesis protein PurH (Bacillus cytotoxicus (strain DSM 22905 / CIP 110041 / 391-98 / NVH 391-98)).